A 784-amino-acid polypeptide reads, in one-letter code: Transcriptional activator somA (784 aa).

Residues 43–75 (MINNLNTYIYDYFLKRGYHECARALVKDESIKL) enclose the LisH domain. Positions 75 to 84 (LNTEPPTKTS) are enriched in polar residues. 4 disordered regions span residues 75–122 (LNTE…PNLA), 212–295 (GLSQ…SQAL), 424–726 (MMAR…DLSI), and 764–784 (GFDP…GDGL). Over residues 103-117 (DSKDGDKIKIPDDLP) the composition is skewed to basic and acidic residues. Low complexity predominate over residues 215–233 (QQQIAQLQKNQQMHMMQQM). Residues 234–244 (QREHSDMDMNG) show a composition bias toward basic and acidic residues. Low complexity predominate over residues 247-259 (PQSPSSAENAPSP). Over residues 453-467 (SPQGSRAGTSPNPNE) the composition is skewed to polar residues. Residues 564-592 (QQQQGQPMGPQQSPAQQPQSTGTPQTQNS) are compositionally biased toward low complexity. Positions 607–624 (RTSPQSQNAAPPTPQQAN) are enriched in polar residues. Residues 629-638 (KKREPKDTAR) show a composition bias toward basic and acidic residues. Low complexity-rich tracts occupy residues 644-661 (KQPA…TPSS) and 691-701 (PTTSAPQQPTS). The segment covering 702–715 (APAPQPIVQQPPPD) has biased composition (pro residues).

This sequence belongs to the FLO8 family. In terms of assembly, interacts with ptaB.

It localises to the nucleus. Its function is as follows. Transcription factor that controls the expression of genes related to the process of conidiation and adherence and regulates biofilm formation. Controls conidiation and adhesion primarily by affecting the expression of the three regulatory genes flbB, stuA and medA. Required for virulence in an egg and a mouse infection model. The sequence is that of Transcriptional activator somA from Aspergillus fumigatus (strain ATCC MYA-4609 / CBS 101355 / FGSC A1100 / Af293) (Neosartorya fumigata).